The sequence spans 148 residues: MKLAVFAVLISTVAAFVAPNGVQRAATTELNAERREFLSAAAVAAGLAFPLTANAIRDYENVGYLGGSEIVDVNNANVRVYLKMPGLYPTLAGKIASNGPYNAVGDLYNIPGLSGKEKELLKKYESRFTAQKPQADYVIDRFNNGLYR.

The transit peptide at 1 to 32 (MKLAVFAVLISTVAAFVAPNGVQRAATTELNA) directs the protein to the chloroplast. A thylakoid-targeting transit peptide spans 33–54 (ERREFLSAAAVAAGLAFPLTAN).

It belongs to the PsbU family. In terms of assembly, PSII is composed of 1 copy each of membrane proteins PsbA, PsbB, PsbC, PsbD, PsbE, PsbF, PsbH, PsbI, PsbJ, PsbK, PsbL, PsbM, PsbT, PsbX, PsbY, PsbZ, Psb30/Ycf12, at least 3 peripheral proteins of the oxygen-evolving complex and a large number of cofactors. It forms dimeric complexes. The oxygen-evolving complex may be composed of PsbO, PsbQ', PsbV and PsbU.

Its subcellular location is the plastid. The protein resides in the chloroplast thylakoid membrane. Functionally, one of the extrinsic, lumenal subunits of photosystem II (PSII), which stabilize and protect the oxygen-evolving complex. PSII is a light-driven water plastoquinone oxidoreductase, using light energy to abstract electrons from H(2)O, generating a proton gradient subsequently used for ATP formation. Stabilizes the structure of photosystem II oxygen-evolving complex (OEC), the ion environment of oxygen evolution and protects the OEC against heat-induced inactivation. This chain is Photosystem II extrinsic protein U, chloroplastic, found in Phaeodactylum tricornutum (Diatom).